A 258-amino-acid polypeptide reads, in one-letter code: Tryptophan synthase alpha chain (258 aa).

Active-site proton acceptor residues include E47 and D58.

It belongs to the TrpA family. Tetramer of two alpha and two beta chains.

It carries out the reaction (1S,2R)-1-C-(indol-3-yl)glycerol 3-phosphate + L-serine = D-glyceraldehyde 3-phosphate + L-tryptophan + H2O. It participates in amino-acid biosynthesis; L-tryptophan biosynthesis; L-tryptophan from chorismate: step 5/5. The alpha subunit is responsible for the aldol cleavage of indoleglycerol phosphate to indole and glyceraldehyde 3-phosphate. The chain is Tryptophan synthase alpha chain from Bacillus cereus (strain ATCC 10987 / NRS 248).